Here is a 485-residue protein sequence, read N- to C-terminus: Glutamyl-tRNA(Gln) amidotransferase subunit A (485 aa).

Active-site charge relay system residues include Lys78 and Ser153. The Acyl-ester intermediate role is filled by Ser177.

Belongs to the amidase family. GatA subfamily. As to quaternary structure, heterotrimer of A, B and C subunits.

The enzyme catalyses L-glutamyl-tRNA(Gln) + L-glutamine + ATP + H2O = L-glutaminyl-tRNA(Gln) + L-glutamate + ADP + phosphate + H(+). In terms of biological role, allows the formation of correctly charged Gln-tRNA(Gln) through the transamidation of misacylated Glu-tRNA(Gln) in organisms which lack glutaminyl-tRNA synthetase. The reaction takes place in the presence of glutamine and ATP through an activated gamma-phospho-Glu-tRNA(Gln). The polypeptide is Glutamyl-tRNA(Gln) amidotransferase subunit A (Lawsonia intracellularis (strain PHE/MN1-00)).